Here is a 161-residue protein sequence, read N- to C-terminus: Leucine-rich colipase-like protein 1 (161 aa).

The N-terminal stretch at 1 to 25 (MSVSVWPPLLLLLLLLLLWAVPTFQ) is a signal peptide.

The chain is Leucine-rich colipase-like protein 1 (Lrcol1) from Mus musculus (Mouse).